Here is a 149-residue protein sequence, read N- to C-terminus: Arginine repressor (149 aa).

The protein belongs to the ArgR family.

The protein localises to the cytoplasm. The protein operates within amino-acid biosynthesis; L-arginine biosynthesis [regulation]. In terms of biological role, regulates arginine biosynthesis genes. The sequence is that of Arginine repressor from Bacillus velezensis (strain DSM 23117 / BGSC 10A6 / LMG 26770 / FZB42) (Bacillus amyloliquefaciens subsp. plantarum).